The primary structure comprises 540 residues: E3 ubiquitin-protein ligase rnf8-A (540 aa).

One can recognise an FHA domain in the interval 30–84 (VTLGRGLGVTYQLKPTLCPLMISRTHCLFKQNTGGEWTVTDNKSLNGVWRNKERL). The disordered stretch occupies residues 128 to 205 (LIRPLPDKTK…SGTESRLNDS (78 aa)). Composition is skewed to polar residues over residues 152–162 (ASGNEGPSNFS) and 179–200 (SSHTTDLYKQPTVEPTASGTES). The RING-type zinc-finger motif lies at 382–420 (CIICSEHFIEAVTLNCAHSFCSYCIKSWKKRKEECPICR). The tract at residues 517–540 (GTDELDSSDFESDDDEEEDSFLII) is disordered. The span at 519–540 (DELDSSDFESDDDEEEDSFLII) shows a compositional bias: acidic residues.

Belongs to the RNF8 family. Homodimer. Forms a E2-E3 ubiquitin ligase complex composed of the rnf8 homodimer and a E2 heterodimer of ube2n and ube2v2.

The protein resides in the nucleus. The catalysed reaction is S-ubiquitinyl-[E2 ubiquitin-conjugating enzyme]-L-cysteine + [acceptor protein]-L-lysine = [E2 ubiquitin-conjugating enzyme]-L-cysteine + N(6)-ubiquitinyl-[acceptor protein]-L-lysine.. The protein operates within protein modification; protein ubiquitination. Its function is as follows. E3 ubiquitin-protein ligase that plays a key role in DNA damage signaling via 2 distinct roles: by mediating the 'Lys-63'-linked ubiquitination of histones H2A and H2AX and promoting the recruitment of DNA repair proteins at double-strand breaks (DSBs) sites, and by catalyzing 'Lys-48'-linked ubiquitination to remove target proteins from DNA damage sites. Following DNA DSBs, it is recruited to the sites of damage by ATM-phosphorylated mdc1 and catalyzes the 'Lys-63'-linked ubiquitination of histones H2A and H2AX, thereby promoting the formation of tp53bp1 and brca1 ionizing radiation-induced foci (IRIF). H2A ubiquitination also mediates the ATM-dependent transcriptional silencing at regions flanking DSBs in cis, a mechanism to avoid collision between transcription and repair intermediates. Also catalyzes the formation of 'Lys-48'-linked polyubiquitin chains, leading to degradation of substrate proteins. In addition to its function in damage signaling, also plays a role in higher-order chromatin structure by mediating extensive chromatin decondensation. The chain is E3 ubiquitin-protein ligase rnf8-A from Xenopus laevis (African clawed frog).